Consider the following 324-residue polypeptide: Biotin synthase (324 aa).

The Radical SAM core domain occupies 43–273; the sequence is FCGNYFNFCS…HVFLRLAGGR (231 aa). Cys-61, Cys-65, and Cys-68 together coordinate [4Fe-4S] cluster. The [2Fe-2S] cluster site is built by Ser-105, Cys-138, Cys-198, and Arg-268.

Belongs to the radical SAM superfamily. Biotin synthase family. Homodimer. [4Fe-4S] cluster serves as cofactor. It depends on [2Fe-2S] cluster as a cofactor.

The catalysed reaction is (4R,5S)-dethiobiotin + (sulfur carrier)-SH + 2 reduced [2Fe-2S]-[ferredoxin] + 2 S-adenosyl-L-methionine = (sulfur carrier)-H + biotin + 2 5'-deoxyadenosine + 2 L-methionine + 2 oxidized [2Fe-2S]-[ferredoxin]. Its pathway is cofactor biosynthesis; biotin biosynthesis; biotin from 7,8-diaminononanoate: step 2/2. Its function is as follows. Catalyzes the conversion of dethiobiotin (DTB) to biotin by the insertion of a sulfur atom into dethiobiotin via a radical-based mechanism. The protein is Biotin synthase of Campylobacter hominis (strain ATCC BAA-381 / DSM 21671 / CCUG 45161 / LMG 19568 / NCTC 13146 / CH001A).